The chain runs to 646 residues: Aquaglycerol porin AQY3 (646 aa).

Low complexity predominate over residues 1 to 14 (MSYESGRSSSSSES). 2 disordered regions span residues 1–68 (MSYE…SRNK) and 175–262 (KNMD…KKRT). At 1–350 (MSYESGRSSS…AKIRYHMREP (350 aa)) the chain is on the cytoplasmic side. Positions 19–41 (TLKEEPNGKIAWEESVKKSRENN) are enriched in basic and acidic residues. Positions 190-201 (TDISRGGSTTSV) are enriched in polar residues. A helical membrane pass occupies residues 351–371 (FAEFLGTLVLVIFGVGGNLQA). The Extracellular segment spans residues 372–383 (TVTKGSGGSYES). Residues 384-404 (LSFAWGFGCMLGVYVAGGISG) form a helical membrane-spanning segment. The Cytoplasmic portion of the chain corresponds to 405-427 (GHINPAVTISMAIFRKFPWKKVP). The short motif at 408–410 (NPA) is the NPA 1 element. A helical transmembrane segment spans residues 428-448 (VYIVAQIIGAYFGGAMAYGYF). Topologically, residues 449-481 (WSSITEFEGGPHIRTTATGACLFTDPKSYVTWR) are extracellular. A helical transmembrane segment spans residues 482–502 (NAFFDEFIGASILVGCLMALL). The Cytoplasmic segment spans residues 503 to 509 (DDSNAPP). A helical transmembrane segment spans residues 510 to 530 (GNGMTALIIGFLVAAIGMALG). Residues 531–569 (YQTSFTINPARDLGPRIFASMIGYGPHAFHLTHWWWTWG) lie on the Extracellular side of the membrane. Positions 538–540 (NPA) match the NPA 2 motif. Residues 570–590 (AWGGPIAGGIAGALIYDIFIF) form a helical membrane-spanning segment. Residues 591 to 646 (TGCESPVNYPDNGYIENRVGKLLHAEFHQNDGTVSDESGVNSNSNTGSKKSVPTSS) lie on the Cytoplasmic side of the membrane. Positions 621–646 (DGTVSDESGVNSNSNTGSKKSVPTSS) are disordered.

It belongs to the MIP/aquaporin (TC 1.A.8) family.

It localises to the cell membrane. It carries out the reaction glycerol(in) = glycerol(out). Channel protein that mediates glycerol entry under ethanol stimulation. Does not seem to mediate glycerol uptake under standard conditions. The chain is Aquaglycerol porin AQY3 from Saccharomyces cerevisiae (strain ATCC 204508 / S288c) (Baker's yeast).